We begin with the raw amino-acid sequence, 1130 residues long: Putative beta-hexosaminidase (1130 aa).

The signal sequence occupies residues 1 to 23; the sequence is MKWVKSGVGILGILLIICHAVTS. Composition is skewed to low complexity over residues 1001-1030 and 1037-1072; these read PGQM…LPAQ and LTGQ…QRTG. Disordered stretches follow at residues 1001–1075 and 1102–1130; these read PGQM…GVVP and QMRG…QQAG.

This sequence belongs to the glycosyl hydrolase 20 family. As to expression, prismatic layer of shell (at protein level). Expressed primarily in the mantle with highest level in the mantle edge and lower level in the mantle pallium.

The protein resides in the secreted. The enzyme catalyses Hydrolysis of terminal non-reducing N-acetyl-D-hexosamine residues in N-acetyl-beta-D-hexosaminides.. Its pathway is glycan degradation; chitin degradation. This Pinctada maxima (Silver-lipped pearl oyster) protein is Putative beta-hexosaminidase.